Reading from the N-terminus, the 407-residue chain is Serine hydroxymethyltransferase (407 aa).

Pyridoxal 5'-phosphate is bound by residues Tyr51 and 94 to 95; that span reads GS. Residues Leu117 and 121-123 contribute to the (6S)-5,6,7,8-tetrahydrofolate site; that span reads GHL. Pyridoxal 5'-phosphate-binding residues include Ser172, His200, and His225. Lys226 bears the N6-(pyridoxal phosphate)lysine mark. Glu242 contributes to the (6S)-5,6,7,8-tetrahydrofolate binding site. Gly258 provides a ligand contact to pyridoxal 5'-phosphate.

This sequence belongs to the SHMT family. Homodimer. Pyridoxal 5'-phosphate serves as cofactor.

The protein resides in the cytoplasm. It catalyses the reaction (6R)-5,10-methylene-5,6,7,8-tetrahydrofolate + glycine + H2O = (6S)-5,6,7,8-tetrahydrofolate + L-serine. Its pathway is one-carbon metabolism; tetrahydrofolate interconversion. It participates in amino-acid biosynthesis; glycine biosynthesis; glycine from L-serine: step 1/1. Catalyzes the reversible interconversion of serine and glycine with tetrahydrofolate (THF) serving as the one-carbon carrier. This reaction serves as the major source of one-carbon groups required for the biosynthesis of purines, thymidylate, methionine, and other important biomolecules. Also exhibits THF-independent aldolase activity toward beta-hydroxyamino acids, producing glycine and aldehydes, via a retro-aldol mechanism. This Thermus thermophilus (strain ATCC 27634 / DSM 579 / HB8) protein is Serine hydroxymethyltransferase.